The following is a 199-amino-acid chain: HTH-type transcriptional regulator BetI (199 aa).

The HTH tetR-type domain maps to 8-68; that stretch reads EIRKPQLVKA…ETMREILRQL (61 aa). The segment at residues 31–50 is a DNA-binding region (H-T-H motif); sequence SISLISKEAGVSTGIINHYF.

It functions in the pathway amine and polyamine biosynthesis; betaine biosynthesis via choline pathway [regulation]. Functionally, repressor involved in the biosynthesis of the osmoprotectant glycine betaine. It represses transcription of the choline transporter BetT and the genes of BetAB involved in the synthesis of glycine betaine. In Vibrio campbellii (strain ATCC BAA-1116), this protein is HTH-type transcriptional regulator BetI.